The primary structure comprises 308 residues: Aspartate carbamoyltransferase catalytic subunit (308 aa).

Positions 58 and 59 each coordinate carbamoyl phosphate. K86 contributes to the L-aspartate binding site. Carbamoyl phosphate contacts are provided by R108, H136, and Q139. Residues R169 and R222 each contribute to the L-aspartate site. Carbamoyl phosphate-binding residues include G264 and P265.

The protein belongs to the aspartate/ornithine carbamoyltransferase superfamily. ATCase family. In terms of assembly, heterododecamer (2C3:3R2) of six catalytic PyrB chains organized as two trimers (C3), and six regulatory PyrI chains organized as three dimers (R2).

It catalyses the reaction carbamoyl phosphate + L-aspartate = N-carbamoyl-L-aspartate + phosphate + H(+). The protein operates within pyrimidine metabolism; UMP biosynthesis via de novo pathway; (S)-dihydroorotate from bicarbonate: step 2/3. Catalyzes the condensation of carbamoyl phosphate and aspartate to form carbamoyl aspartate and inorganic phosphate, the committed step in the de novo pyrimidine nucleotide biosynthesis pathway. The sequence is that of Aspartate carbamoyltransferase catalytic subunit from Campylobacter hominis (strain ATCC BAA-381 / DSM 21671 / CCUG 45161 / LMG 19568 / NCTC 13146 / CH001A).